The following is a 133-amino-acid chain: Large ribosomal subunit protein uL22 (133 aa).

It belongs to the universal ribosomal protein uL22 family. In terms of assembly, part of the 50S ribosomal subunit.

Its function is as follows. This protein binds specifically to 23S rRNA; its binding is stimulated by other ribosomal proteins, e.g. L4, L17, and L20. It is important during the early stages of 50S assembly. It makes multiple contacts with different domains of the 23S rRNA in the assembled 50S subunit and ribosome. The globular domain of the protein is located near the polypeptide exit tunnel on the outside of the subunit, while an extended beta-hairpin is found that lines the wall of the exit tunnel in the center of the 70S ribosome. The sequence is that of Large ribosomal subunit protein uL22 from Granulibacter bethesdensis (strain ATCC BAA-1260 / CGDNIH1).